A 1601-amino-acid polypeptide reads, in one-letter code: Ras guanine nucleotide exchange factor glfB (1601 aa).

Disordered stretches follow at residues proline 43–aspartate 140, aspartate 188–threonine 256, serine 310–serine 461, and leucine 475–glycine 630. Positions leucine 45–threonine 55 are enriched in pro residues. The span at glutamine 57 to isoleucine 69 shows a compositional bias: polar residues. Positions serine 70–asparagine 126 are enriched in low complexity. At serine 197 the chain carries Phosphoserine. At threonine 201 the chain carries Phosphothreonine. 2 stretches are compositionally biased toward low complexity: residues glutamine 211 to threonine 256 and serine 310 to valine 330. The segment covering alanine 331 to threonine 359 has biased composition (acidic residues). A compositionally biased stretch (polar residues) spans proline 384–threonine 398. 3 stretches are compositionally biased toward low complexity: residues threonine 435–alanine 458, leucine 475–isoleucine 493, and serine 500–lysine 520. Basic and acidic residues predominate over residues proline 521–lysine 533. Residues valine 558–glycine 577 are compositionally biased toward low complexity. The span at isoleucine 578 to glutamate 596 shows a compositional bias: basic and acidic residues. In terms of domain architecture, Rho-GAP spans valine 649–phenylalanine 836. An N-terminal Ras-GEF domain is found at glycine 851–lysine 983. In terms of domain architecture, Ras-GEF spans serine 1021–proline 1255. Positions tyrosine 1262–glutamate 1601 are N-terminal F-actin-binding domain. The segment at serine 1443–proline 1474 is disordered. A compositionally biased stretch (low complexity) spans glutamine 1465–proline 1474.

Interacts with gpaB and rapA. Interacts directly with F-actin. Simultaneously phosphorylated at Ser-197 and Thr-201 after cAMP stimulation.

Its subcellular location is the cytoplasm. It localises to the cell cortex. The protein localises to the cytoskeleton. The protein resides in the cell projection. It is found in the filopodium. Its subcellular location is the lamellipodium. In terms of biological role, gpaB-activated, rapA-specific guanine nucleotide exchange factor, involved in the regulation of the balance between Ras and Rap signaling at the leading edge of chemotaxing cells. Spatially localized activation of Rap and Ras induces F-actin polymerization at the leading edge of chemotaxing cells through the Rac, PI3K, and TORC2 pathways. Also acts as a key regulator of actin-driven membrane protrusions during processes such as phagocytosis and cytokinesis, possibly by modulating rapA signaling pathways. This Dictyostelium discoideum (Social amoeba) protein is Ras guanine nucleotide exchange factor glfB.